The chain runs to 540 residues: MAWVLKMDEVIESGLVHDFDASLSGIGQELGAGAYSMSDVLALPIFKQEDSSLPLDGETEHPPFQYVMCAATSPAVKLHDETLTYLNQGQSYEIRMLDNRKMGDMPEINGKLVKSIIRVVFHDRRLQYTEHQQLEGWKWNRPGDRLLDLDIPMSVGIIDTRTNPSQLNAVEFLWDPAKRTSAFIQVHCISTEFTPRKHGGEKGVPFRIQVDTFKQNENGEYTDHLHSASCQIKVFKPKGADRKQKTDREKMEKRTAHEKEKYQPSYDTTILTEMRLEPIIEDAVEHEQKKSSKRTLPADYGDSLAKRGSCSPWPDAPTAYVNNSPSPAPTFTSPQQSTCSVPDSNSSSPNHQGDGASQTSGEQIQPSATIQETQQWLLKNRFSSYTRLFSNFSGADLLKLTKEDLVQICGAADGIRLYNSLKSRSVRPRLTIYVCREQPSSTVLQGQQQAASSASENGSGAPYVYHAIYLEEMIASEVARKLALVFNIPLHQINQVYRQGPTGIHILVSDQMVQNFQDESCFLFSTVKAESSDGIHIILK.

Phosphoserine is present on Ser-22. Residues Glu-60 to Leu-296 enclose the Grh/CP2 DB domain. Disordered regions lie at residues Lys-236–Ile-270 and Glu-285–Ala-368. Residues Lys-238 to Tyr-262 show a composition bias toward basic and acidic residues. The span at Tyr-320–Ala-368 shows a compositional bias: polar residues. Residues Ser-390 and Ser-393 each carry the phosphoserine modification.

The protein belongs to the grh/CP2 family. CP2 subfamily. As to quaternary structure, interacts with TFCP2. Interacts with PIAS1, and is probably part of a complex containing TFCP2, UBP1 and PIAS1. As to expression, expressed in adrenal tissue, JEG-3, NCI-H295A, Hep-G2 and HeLa cell lines.

Its subcellular location is the nucleus. Functionally, functions as a transcriptional activator in a promoter context-dependent manner. Modulates the placental expression of CYP11A1. Involved in regulation of the alpha-globin gene in erythroid cells. Activation of the alpha-globin promoter in erythroid cells is via synergistic interaction with TFCP2. Involved in regulation of the alpha-globin gene in erythroid cells. Binds strongly to sequences around the HIV-1 initiation site and weakly over the TATA-box. Represses HIV-1 transcription by inhibiting the binding of TFIID to the TATA-box. This chain is Upstream-binding protein 1 (UBP1), found in Homo sapiens (Human).